Consider the following 168-residue polypeptide: Disulfide bond formation protein B 2 (168 aa).

At 1–9 (MLPARLRTF) the chain is on the cytoplasmic side. A helical membrane pass occupies residues 10 to 26 (FLPACLVALAVLVASFR). Over 27-44 (LENTVGLMPCPLCLSQRL) the chain is Periplasmic. Cysteines 36 and 39 form a disulfide. The chain crosses the membrane as a helical span at residues 45 to 61 (LLGGYALLCFAAVLQAP). Topologically, residues 62 to 67 (GTRGIL) are cytoplasmic. Residues 68–85 (RYARLALGCSLAGALLAA) form a helical membrane-spanning segment. The Periplasmic segment spans residues 86–140 (RHVWLQGAEGVNEVCPVPIGRVFEQSWSEAARQLLLGGPDCRSLAWSFLDLTLPE). An intrachain disulfide couples Cys100 to Cys126. Residues 141 to 159 (WSLLAFLLLAVLPLSCLLA) traverse the membrane as a helical segment. Over 160–168 (YRFRTLART) the chain is Cytoplasmic.

This sequence belongs to the DsbB family.

The protein localises to the cell inner membrane. In terms of biological role, required for disulfide bond formation in some periplasmic proteins. Acts by oxidizing the DsbA protein. The chain is Disulfide bond formation protein B 2 (dsbB2) from Pseudomonas putida (strain ATCC 47054 / DSM 6125 / CFBP 8728 / NCIMB 11950 / KT2440).